The primary structure comprises 134 residues: Large-conductance mechanosensitive channel (134 aa).

The next 2 membrane-spanning stretches (helical) occupy residues 16 to 36 and 81 to 101; these read VIDL…VTAL and GDFI…FIVV.

This sequence belongs to the MscL family. As to quaternary structure, homopentamer.

Its subcellular location is the cell inner membrane. Functionally, channel that opens in response to stretch forces in the membrane lipid bilayer. May participate in the regulation of osmotic pressure changes within the cell. In Stenotrophomonas maltophilia (strain K279a), this protein is Large-conductance mechanosensitive channel.